Consider the following 71-residue polypeptide: Protein DP71L (71 aa).

2 important for host CHOP inhibition regions span residues 16 to 18 and 57 to 61; these read VRF and LSTVL.

Belongs to the asfivirus DP71L family. In terms of assembly, interacts (via C-terminus) with host PPP1CB.

Its function is as follows. Interacts with the host phosphatase PP1 catalytic subunit (PPP1CB) and recruits it to dephosphorylate EIF2S1/eIF2alpha and therefore restores the host translation that has been shut-down by the host. Also inhibits the EIF2S1/eIF2alpha-ATF4-DDIT3/CHOP pathway. This African swine fever virus (strain Badajoz 1971 Vero-adapted) (Ba71V) protein is Protein DP71L.